The following is a 391-amino-acid chain: MSRFLICSFALVLLYPAGIDMYLVGLPRIAADLNASEAQLHIAFSVYLAGMAAAMLFAGKVADRSGRKPVAIPGAALFIIASVFCSLAETSTLFLAGRFLQGLGAGCCYVVAFAILRDTLDDRRRAKVLSLLNGITCIIPVLAPVLGHLIMLKFPWQSLFWAMAMMGIAVLMLSLFILKETRPASPAASDKPRENSESLLNRFFLSRVVITTLSVSVILTFVNTSPVLLMEIMGFERGEYATIMALTAGVSMTVSFSTPFALGIFKPRTLMITSQVLFLAAGITLAVSPSHAVSLFGITLICAGFSVGFGVAMSQALGPFSLRAGVASSTLGIAQVCGSSLWIWLAAVVGIGAWNMLIGILIACSIVSLLLIMFVAPGRPVAAHEEIHHHA.

Helical transmembrane passes span 4 to 24 (FLIC…MYLV), 42 to 62 (IAFS…GKVA), 69 to 89 (PVAI…SLAE), 93 to 113 (LFLA…VVAF), 131 to 151 (LLNG…HLIM), 158 to 178 (SLFW…LFIL), 203 to 222 (FFLS…LTFV), 245 to 265 (ALTA…LGIF), 269 to 289 (TLMI…AVSP), 293 to 313 (VSLF…GVAM), 331 to 351 (LGIA…VVGI), and 356 to 376 (MLIG…MFVA).

This sequence belongs to the major facilitator superfamily. DHA1 family. MdtL (TC 2.A.1.2.22) subfamily.

It is found in the cell inner membrane. Its function is as follows. Confers resistance to chloramphenicol. The protein is Multidrug resistance protein MdtL of Escherichia coli O9:H4 (strain HS).